A 1672-amino-acid chain; its full sequence is Probable outer membrane protein PmpB (1672 aa).

The signal sequence occupies residues 1-14; the sequence is MSSMKWLSATAVFA. 4 disordered regions span residues 69–122, 203–263, 384–415, and 734–765; these read IPVK…GGAF, NTAE…GSGG, EAQT…AKGG, and STGV…PAPA. Composition is skewed to low complexity over residues 77–88, 100–111, and 203–234; these read DDSSTSTPTTSS, SSSSSPNSGDTS, and NTAE…SKVQ. Composition is skewed to polar residues over residues 235–256 and 384–399; these read SLFT…QTPS and EAQT…SQSG. The segment covering 734–744 has biased composition (low complexity); that stretch reads STGVATTATTS. The 294-residue stretch at 1379-1672 folds into the Autotransporter domain; sequence DDAAYNNFWV…MTSCGARMIF (294 aa).

The protein belongs to the PMP outer membrane protein family.

It localises to the secreted. It is found in the cell wall. Its subcellular location is the cell outer membrane. This is Probable outer membrane protein PmpB (pmpB) from Chlamydia muridarum (strain MoPn / Nigg).